A 335-amino-acid chain; its full sequence is Protein BIG1 (335 aa).

The N-terminal stretch at 1 to 17 (MQTVLKYLLLIMCGSFC) is a signal peptide. Topologically, residues 20–275 (EELQNQTNVP…FDSQLIENNR (256 aa)) are lumenal. Residues Asn-24 and Asn-144 are each glycosylated (N-linked (GlcNAc...) asparagine). Residues 276–296 (GLLQLIFTILVGYILIQFFFT) form a helical membrane-spanning segment. The Cytoplasmic portion of the chain corresponds to 297–335 (KKTIVDEKITNKKDNVKQTSPQLLKKVQEIQKKPSQQVS).

It belongs to the BIG1 family. N-glycosylated.

It localises to the endoplasmic reticulum membrane. In terms of biological role, required for normal beta-1,6-glucan synthesis. The polypeptide is Protein BIG1 (BIG1) (Saccharomyces cerevisiae (strain ATCC 204508 / S288c) (Baker's yeast)).